The following is a 459-amino-acid chain: Serine protease HTRA3 (459 aa).

The first 23 residues, 1–23 (MQARALLPATLATLATLAVSVLA), serve as a signal peptide directing secretion. The 64-residue stretch at 27 to 90 (PAAPCPARCD…ECVRGVCRCR (64 aa)) folds into the IGFBP N-terminal domain. 8 disulfides stabilise this stretch: Cys31/Cys54, Cys35/Cys56, Cys40/Cys57, Cys45/Cys60, Cys68/Cys82, Cys76/Cys87, Cys89/Cys107, and Cys96/Cys132. A Kazal-like domain is found at 76–134 (CGDSLECVRGVCRCRWTHTVCGTDGHTYADVCALQAASRRALQISGTPVRQLQKGACPS). The interval 181 to 346 (GSGFIMSEAG…AIPSDRITRF (166 aa)) is serine protease. Catalysis depends on charge relay system residues His197, Asp233, and Ser311. Residues 365-450 (IRMRTITPSL…EVRRGNDDLL (86 aa)) enclose the PDZ domain.

Belongs to the peptidase S1C family. In terms of assembly, homotrimer. Interacts with TGFB1; the interaction inhibits TGFB-mediated signaling. Interacts with BMP4; the interaction inhibits BMP4-mediated signaling. Interacts with TGFB2, GDF5 and MYH9. As to expression, expressed in the ovary, essentially in granulosa cells in a follicle-stage specific manner. Highest levels found in large luteinizing granulosa cells.

It localises to the secreted. In terms of biological role, serine protease that cleaves beta-casein/CSN2 as well as several extracellular matrix (ECM) proteoglycans such as decorin/DCN, biglycan/BGN and fibronectin/FN1. Inhibits signaling mediated by TGF-beta family proteins possibly indirectly by degradation of these ECM proteoglycans. May act as a tumor suppressor. Negatively regulates, in vitro, trophoblast invasion during placental development and may be involved in the development of the placenta in vivo. May also have a role in ovarian development, granulosa cell differentiation and luteinization. The polypeptide is Serine protease HTRA3 (Htra3) (Rattus norvegicus (Rat)).